The chain runs to 57 residues: UPF0391 membrane protein HNE_2348 (57 aa).

2 consecutive transmembrane segments (helical) span residues 4 to 24 (WALT…GGIA) and 27 to 47 (AASI…ITFV).

The protein belongs to the UPF0391 family.

The protein localises to the cell membrane. In Hyphomonas neptunium (strain ATCC 15444), this protein is UPF0391 membrane protein HNE_2348.